The primary structure comprises 993 residues: UPF0182 protein Sare_4110 (993 aa).

A run of 7 helical transmembrane segments spans residues 18–38 (IGVLVGVFVLFTLLGWGVQAW), 61–81 (LLLFVTVGLAMAVVVGGNLWL), 110–130 (LGTWFAVVSVVVGLFAGLSAQ), 171–191 (GVAFTAVVLALIGALAVHYVF), 209–229 (AHLSALVAVFVLLKAVAYVLD), 260–280 (ILAYISVVVAIAVLVFSNAWM), and 283–303 (LVWPGISLALLGVSAVAIGGI). Disordered regions lie at residues 892 to 937 (QGEK…ADAA) and 974 to 993 (EQAAGPGSAATPTGSPSPGG). Residues 900–929 (STPPPSGETPAPTPTPTPTPSSPSVTPPPV) are compositionally biased toward pro residues. Low complexity predominate over residues 976-993 (AAGPGSAATPTGSPSPGG).

The protein belongs to the UPF0182 family.

It localises to the cell membrane. The polypeptide is UPF0182 protein Sare_4110 (Salinispora arenicola (strain CNS-205)).